A 363-amino-acid polypeptide reads, in one-letter code: 43 kDa protein (363 aa).

This Lepidoptera (butterflies and moths) protein is 43 kDa protein (P43).